Here is a 1176-residue protein sequence, read N- to C-terminus: DNA-directed RNA polymerase subunit beta (1176 aa).

Positions 13–30 (TDASLHQGRPQSSSNSSV) are enriched in polar residues. Positions 13-35 (TDASLHQGRPQSSSNSSVPGAPN) are disordered.

The protein belongs to the RNA polymerase beta chain family. As to quaternary structure, the RNAP catalytic core consists of 2 alpha, 1 beta, 1 beta' and 1 omega subunit. When a sigma factor is associated with the core the holoenzyme is formed, which can initiate transcription.

The enzyme catalyses RNA(n) + a ribonucleoside 5'-triphosphate = RNA(n+1) + diphosphate. Its function is as follows. DNA-dependent RNA polymerase catalyzes the transcription of DNA into RNA using the four ribonucleoside triphosphates as substrates. This chain is DNA-directed RNA polymerase subunit beta, found in Mycobacterium marinum (strain ATCC BAA-535 / M).